Consider the following 587-residue polypeptide: Glutathione hydrolase proenzyme (587 aa).

The first 28 residues, 1 to 28, serve as a signal peptide directing secretion; it reads MKRTWNVCLTALLSVLLVAGSVPFHAEA. A propeptide spanning residues 29–35 is cleaved from the precursor; that stretch reads KKPPKSY. R113 is a binding site for L-glutamate. The Nucleophile role is filled by T403. Residues T421, E423, E442, D445, 464-465, and 485-486 contribute to the L-glutamate site; these read SS and GG.

The protein belongs to the gamma-glutamyltransferase family. This enzyme consists of two polypeptide chains, which are synthesized in precursor form from a single polypeptide. Post-translationally, cleaved by autocatalysis into a large and a small subunit.

It localises to the secreted. The enzyme catalyses an N-terminal (5-L-glutamyl)-[peptide] + an alpha-amino acid = 5-L-glutamyl amino acid + an N-terminal L-alpha-aminoacyl-[peptide]. It carries out the reaction glutathione + H2O = L-cysteinylglycine + L-glutamate. It catalyses the reaction an S-substituted glutathione + H2O = an S-substituted L-cysteinylglycine + L-glutamate. Its pathway is sulfur metabolism; glutathione metabolism. Cleaves the gamma-glutamyl bond of extracellular glutathione (gamma-Glu-Cys-Gly), glutathione conjugates, and other gamma-glutamyl compounds. The metabolism of glutathione releases free glutamate and the dipeptide cysteinyl-glycine, which is hydrolyzed to cysteine and glycine by dipeptidases. The chain is Glutathione hydrolase proenzyme (ggt) from Bacillus subtilis (strain 168).